The sequence spans 530 residues: N-acetylmuramoyl-L-alanine amidase (530 aa).

The first 22 residues, 1–22, serve as a signal peptide directing secretion; it reads MKAWGALWIVLGLLLWPEPGAA. N-linked (GlcNAc...) asparagine glycosylation is found at Asn-61, Asn-80, and Asn-174. Phosphoserine is present on Ser-219. Asn-335 carries an N-linked (GlcNAc...) asparagine glycan. One can recognise an N-acetylmuramoyl-L-alanine amidase domain in the interval 386-512; it reads FLYVHHTYVP…RQLVLTHCPG (127 aa). Residue His-390 coordinates Zn(2+). Cys-399 and Cys-405 form a disulfide bridge. N-linked (GlcNAc...) asparagine glycosylation is present at Asn-465. Residues His-502 and Cys-510 each contribute to the Zn(2+) site.

Belongs to the N-acetylmuramoyl-L-alanine amidase 2 family. The cofactor is Zn(2+). Strongly expressed in liver and fetal liver.

It localises to the secreted. It is found in the membrane. The catalysed reaction is Hydrolyzes the link between N-acetylmuramoyl residues and L-amino acid residues in certain cell-wall glycopeptides.. Functionally, may play a scavenger role by digesting biologically active peptidoglycan (PGN) into biologically inactive fragments. Has no direct bacteriolytic activity. This chain is N-acetylmuramoyl-L-alanine amidase (Pglyrp2), found in Mus musculus (Mouse).